Here is a 398-residue protein sequence, read N- to C-terminus: DnaJ-like protein R260 (398 aa).

The region spanning 7-72 is the J domain; it reads DLYEILGLTP…EKRRVYDQYG (66 aa). The CR-type zinc finger occupies 118–202; it reads KKTVKVTITV…CKGAGINKSE (85 aa). CXXCXGXG motif repeat units follow at residues 131–138, 147–154, 173–180, and 190–197; these read CDDCDATG, CKVCRGKG, CHGCQGKK, and CPSCKGAG. Residues 364 to 398 form a disordered region; the sequence is LRQINTDPSDESQDRDSEESYGGHGRPEGVGCAQQ. The span at 371-382 shows a compositional bias: acidic residues; the sequence is PSDESQDRDSEE.

It depends on Zn(2+) as a cofactor.

This chain is DnaJ-like protein R260, found in Acanthamoeba polyphaga mimivirus (APMV).